We begin with the raw amino-acid sequence, 336 residues long: Fructose-1,6-bisphosphatase class 1 (336 aa).

Residues glutamate 90, aspartate 112, leucine 114, and aspartate 115 each contribute to the Mg(2+) site. Substrate-binding positions include 115–118 (DGSS), asparagine 211, and lysine 277. Glutamate 283 is a Mg(2+) binding site.

Belongs to the FBPase class 1 family. In terms of assembly, homotetramer. Mg(2+) is required as a cofactor.

It localises to the cytoplasm. It carries out the reaction beta-D-fructose 1,6-bisphosphate + H2O = beta-D-fructose 6-phosphate + phosphate. It functions in the pathway carbohydrate biosynthesis; gluconeogenesis. The polypeptide is Fructose-1,6-bisphosphatase class 1 (Pseudomonas savastanoi pv. phaseolicola (strain 1448A / Race 6) (Pseudomonas syringae pv. phaseolicola (strain 1448A / Race 6))).